The sequence spans 597 residues: MFS-type transporter FPY5 (597 aa).

Positions 1 to 55 (MSETTGLPLKHLQGSPPGTPVNTNNESNEASPDDGCRLPDTVTEAEASSDNHGSV) are disordered. Composition is skewed to polar residues over residues 20–30 (PVNTNNESNEA) and 46–55 (EASSDNHGSV). A glycan (N-linked (GlcNAc...) asparagine) is linked at Asn25. A glycan (N-linked (GlcNAc...) asparagine) is linked at Asn72. Transmembrane regions (helical) follow at residues 94 to 114 (LSLL…VSIV), 120 to 140 (FNMA…FLII), 147 to 167 (IFGC…FSMA), 183 to 203 (FQGM…PLMV), 214 to 234 (IMSS…GAIT), 241 to 261 (WVFY…AFSV), 286 to 306 (VDFV…FALE), 316 to 336 (SGAI…FIAW), and 360 to 380 (FVMG…AALI). Asn390 carries an N-linked (GlcNAc...) asparagine glycan. 5 consecutive transmembrane segments (helical) span residues 402 to 422 (LPLL…VSKL), 424 to 444 (VPPL…VGLY), 463 to 483 (IMGL…PLVV), 498 to 518 (IRVL…INHI), and 562 to 582 (EQMR…VLLV).

Belongs to the major facilitator superfamily. TCR/Tet family.

It is found in the membrane. The protein operates within secondary metabolite biosynthesis. Functionally, MFS-type transporter; part of the gene cluster that mediates the biosynthesis of the gamma-pyrones fusapyrone (FPY) and deoxyfusapyrone (dFPY). In Fusarium mangiferae (Mango malformation disease fungus), this protein is MFS-type transporter FPY5.